The chain runs to 328 residues: MSQLDLLNIVHRPRRLRRTAALRNLVQENTLTVNDLVFPLFVMPGTNAVEEVSSMPGSFRFTIDRAVEECKELYDLGIQGIDLFGIPEQKTEDGSEAYNDNGILQQAIRAIKKAVPELCIMTDVALDPFTPFGHDGLVKDGIILNDETVEVLQKMAVSHAEAGADFVSPSDMMDGRIGAIREALDETDHSDVGILSYAAKYASSFYGPFRDALHSAPQFGDKSTYQMNPANTEEAMKEVELDIVEGADIVMVKPGLAYLDIVWRTKERFDVPVAIYHVSGEYAMVKAAAAKGWIDEDRVMMESLLCMKRAGADIIFTYYAKEAAKKLR.

The Schiff-base intermediate with substrate role is filled by Lys200. 5-aminolevulinate contacts are provided by Arg210 and Lys222. Glu238 provides a ligand contact to Mg(2+). Lys253 acts as the Schiff-base intermediate with substrate in catalysis. Residues Ser279 and Tyr318 each contribute to the 5-aminolevulinate site.

It belongs to the ALAD family. In terms of assembly, homooctamer.

It carries out the reaction 2 5-aminolevulinate = porphobilinogen + 2 H2O + H(+). The protein operates within porphyrin-containing compound metabolism; protoporphyrin-IX biosynthesis; coproporphyrinogen-III from 5-aminolevulinate: step 1/4. With respect to regulation, stimulated by magnesium, inhibited by zinc. In terms of biological role, catalyzes an early step in the biosynthesis of tetrapyrroles. Binds two molecules of 5-aminolevulinate per subunit, each at a distinct site, and catalyzes their condensation to form porphobilinogen. The polypeptide is Delta-aminolevulinic acid dehydratase (hemB) (Chlorobaculum parvum (strain DSM 263 / NCIMB 8327) (Chlorobium vibrioforme subsp. thiosulfatophilum)).